The primary structure comprises 121 residues: MAKTNLKTLARAKRISRIRKKISGTSERPRLRVFKSNKHIYAQIIDDASGKSLVAMSTVDKQFDLGDESGKTAAAKKVGVVLAERATAAGIKKVIFDRGGYIYHGRVKSLSEGAREGGLDF.

The protein belongs to the universal ribosomal protein uL18 family. In terms of assembly, part of the 50S ribosomal subunit; part of the 5S rRNA/L5/L18/L25 subcomplex. Contacts the 5S and 23S rRNAs.

Functionally, this is one of the proteins that bind and probably mediate the attachment of the 5S RNA into the large ribosomal subunit, where it forms part of the central protuberance. The chain is Large ribosomal subunit protein uL18 from Desulfotalea psychrophila (strain LSv54 / DSM 12343).